We begin with the raw amino-acid sequence, 325 residues long: Eukaryotic translation initiation factor 3 subunit I (325 aa).

4 WD repeats span residues 8–47 (GHER…RLGT), 50–91 (GHTG…ALLK), 144–183 (CNDS…VLVN), and 186–225 (EHSR…HQKT). Residue threonine 219 is modified to Phosphothreonine. Position 264 is an N6-acetyllysine (lysine 264). A Glycyl lysine isopeptide (Lys-Gly) (interchain with G-Cter in ubiquitin) cross-link involves residue lysine 282. The WD 5 repeat unit spans residues 283–324 (GHFGPINSVAFHPDGKSYSSGGEDGYVRIHYFDPQYFEFEFE). Tyrosine 308 bears the Phosphotyrosine mark.

Belongs to the eIF-3 subunit I family. As to quaternary structure, component of the eukaryotic translation initiation factor 3 (eIF-3) complex, which is composed of 13 subunits: EIF3A, EIF3B, EIF3C, EIF3D, EIF3E, EIF3F, EIF3G, EIF3H, EIF3I, EIF3J, EIF3K, EIF3L and EIF3M. The eIF-3 complex appears to include 3 stable modules: module A is composed of EIF3A, EIF3B, EIF3G and EIF3I; module B is composed of EIF3F, EIF3H, and EIF3M; and module C is composed of EIF3C, EIF3D, EIF3E, EIF3K and EIF3L. EIF3C of module C binds EIF3B of module A and EIF3H of module B, thereby linking the three modules. EIF3J is a labile subunit that binds to the eIF-3 complex via EIF3B. The eIF-3 complex interacts with RPS6KB1 under conditions of nutrient depletion. Mitogenic stimulation leads to binding and activation of a complex composed of MTOR and RPTOR, leading to phosphorylation and release of RPS6KB1 and binding of EIF4B to eIF-3. Phosphorylated by TGF-beta type II receptor.

The protein localises to the cytoplasm. In terms of biological role, component of the eukaryotic translation initiation factor 3 (eIF-3) complex, which is required for several steps in the initiation of protein synthesis. The eIF-3 complex associates with the 40S ribosome and facilitates the recruitment of eIF-1, eIF-1A, eIF-2:GTP:methionyl-tRNAi and eIF-5 to form the 43S pre-initiation complex (43S PIC). The eIF-3 complex stimulates mRNA recruitment to the 43S PIC and scanning of the mRNA for AUG recognition. The eIF-3 complex is also required for disassembly and recycling of post-termination ribosomal complexes and subsequently prevents premature joining of the 40S and 60S ribosomal subunits prior to initiation. The eIF-3 complex specifically targets and initiates translation of a subset of mRNAs involved in cell proliferation, including cell cycling, differentiation and apoptosis, and uses different modes of RNA stem-loop binding to exert either translational activation or repression. This Bos taurus (Bovine) protein is Eukaryotic translation initiation factor 3 subunit I.